Consider the following 270-residue polypeptide: 4-hydroxy-tetrahydrodipicolinate reductase (270 aa).

NAD(+) is bound by residues 11-16 and Glu-37; that span reads GAGGRM. Residue Arg-38 participates in NADP(+) binding. Residues 101 to 103 and 125 to 128 contribute to the NAD(+) site; these read GTT and APNM. The active-site Proton donor/acceptor is the His-158. Residue His-159 participates in (S)-2,3,4,5-tetrahydrodipicolinate binding. Lys-162 (proton donor) is an active-site residue. 168–169 is a binding site for (S)-2,3,4,5-tetrahydrodipicolinate; that stretch reads GT.

The protein belongs to the DapB family.

It is found in the cytoplasm. The catalysed reaction is (S)-2,3,4,5-tetrahydrodipicolinate + NAD(+) + H2O = (2S,4S)-4-hydroxy-2,3,4,5-tetrahydrodipicolinate + NADH + H(+). The enzyme catalyses (S)-2,3,4,5-tetrahydrodipicolinate + NADP(+) + H2O = (2S,4S)-4-hydroxy-2,3,4,5-tetrahydrodipicolinate + NADPH + H(+). Its pathway is amino-acid biosynthesis; L-lysine biosynthesis via DAP pathway; (S)-tetrahydrodipicolinate from L-aspartate: step 4/4. Functionally, catalyzes the conversion of 4-hydroxy-tetrahydrodipicolinate (HTPA) to tetrahydrodipicolinate. This chain is 4-hydroxy-tetrahydrodipicolinate reductase, found in Shewanella sp. (strain W3-18-1).